The following is a 409-amino-acid chain: LIM/homeobox protein ttx-3 (409 aa).

2 LIM zinc-binding domains span residues 108 to 169 (NQCC…RYQK) and 171 to 232 (CRKC…VRST). 2 disordered regions span residues 245–299 (AVVA…RTSF) and 372–409 (MNPP…YTHL). Positions 247 to 267 (VAPPPPPPTTTTAPPPAAPEQ) are enriched in pro residues. A DNA-binding region (homeobox) is located at residues 292 to 351 (SKRMRTSFKHHQLRAMKTYFALNHNPDAKDLKQLAAKTNLTKRVLQVWFQNARAKYRREL). The span at 382–409 (GHSTDGYQLNTPPLSSEIYSPNSNYTHL) shows a compositional bias: polar residues.

In terms of tissue distribution, expressed in the AIA, AIN and AIY interneurons, and in the NSM neurons. Expressed also in ADL and ASI sensory neurons in 60-70% of L2 larvae. Expression is also detected in head muscles of embryos and some early larvae but not late larvae or adults.

Its subcellular location is the nucleus. It is found in the perikaryon. It localises to the cell projection. The protein resides in the axon. Functionally, transcription factor. Binds to a sequence motif, 5'-TTATTGGCTTCGTTAA-3', which may be involved in AIY interneuron function, in the regulatory elements of target genes; binding is more efficient, in vitro, together with homeobox protein ceh-10. Required for specification of the AIA and AIY interneurons and the NSM neurons. Positively regulates the expression of a number of genes including ceh-10, ceh-23, kal-1, hen-1, ser-2, unc-17 and sra-11 in AIY neurons, and cat-4, flp-4, bas-1, ptps-1 and mgl-1 in NSM neurons. In concert with WNT/beta-catenin signaling, initiates expression of homeobox ceh-10 in AIY, but not in the sister cells, SMDD motor neurons. Also acts in an autoregulatory feedback loop to maintain its own expression. Plays a role in the thermotactic response, olfactory imprinting, regulation of longevity, control of dauer formation and axon outgrowth and pathfinding. Not required for normal chemosensory behavior. The polypeptide is LIM/homeobox protein ttx-3 (Caenorhabditis elegans).